Here is a 210-residue protein sequence, read N- to C-terminus: Ras-related protein Rab-2-B (210 aa).

13-21 (GDTGVGKSC) contacts GTP. The short motif at 35-43 (HDLTIGVEF) is the Effector region element. GTP-binding positions include 61-65 (DTAGQ), 119-122 (NKCD), and 149-151 (SAK). 2 S-geranylgeranyl cysteine lipidation sites follow: C208 and C209.

This sequence belongs to the small GTPase superfamily. Rab family.

It localises to the endoplasmic reticulum membrane. The protein localises to the golgi apparatus membrane. Functionally, protein transport. Probably involved in vesicular traffic. The sequence is that of Ras-related protein Rab-2-B (RAB2B) from Zea mays (Maize).